The primary structure comprises 273 residues: MADMHEWVIAFILGGVEGLTEFLPVSSTGHMILVGSLLGFTDDKAKTFEVIIQLGSILAVVVVFWRRLFGLIGIHFGQVPHEGIGSGRLRLGHILLGMIPAVVLGLVFHEQIKAIFAPIYVMYALVVGGVLLLAGEWLKPKVPRAAGIDDLTYLQAFLIGCFQCLALWPGFSRSGATISGGLLVGVSRYAASEFSFILAVPMMLGATVLDLYKSLPFLSWQDLPMFAIGFVTAFVVALLAIKFFLQIIKRISFVPFAIYRFILAVVVYWILIG.

The next 8 helical transmembrane spans lie at G18 to F40, A45 to W65, G92 to I112, A114 to A134, L151 to F171, Y189 to L209, M225 to L245, and F253 to G273.

The protein belongs to the UppP family.

Its subcellular location is the cell inner membrane. The enzyme catalyses di-trans,octa-cis-undecaprenyl diphosphate + H2O = di-trans,octa-cis-undecaprenyl phosphate + phosphate + H(+). Catalyzes the dephosphorylation of undecaprenyl diphosphate (UPP). Confers resistance to bacitracin. The sequence is that of Undecaprenyl-diphosphatase from Sodalis glossinidius (strain morsitans).